Consider the following 394-residue polypeptide: MPPKAKAKDAGPVERPILGRFSSHLKIGIVGLPNVGKSTLFNTLTKLSIPAENFPFCTIEPNEARVNIPDERFDWLCQTYKPKSEIPAFLEIHDIAGLVRGAHEGQGLGNNFLSHIRAVDGIFHVLRAFEDADIIHVDDIVDPVRDLETITEELRLKDIEFVGKKIDDVEKSMKRSNDKQLKIELELLQKVKAWLEDGKDVRFGDWKTADIEILNTFQLLSAKPVVYLINLNERDYQRKKNKFLPKIHAWVQEHGGDTMIPFSGVFERSLADMAPDEAAKYCEENKLQSALPRIIKTGFSAINLIYFFTAGPDEVKCWQIRRQSKAPQAAGAIHTDFERGFICAEVMKFEDLKELGNEPAVKAAGKYRQEGKTYVVQDGDIIFFKFNVSGGGKK.

One can recognise an OBG-type G domain in the interval 25–282 (LKIGIVGLPN…MAPDEAAKYC (258 aa)). ATP contacts are provided by residues 34-39 (NVGKST), 56-60 (FCTIE), and 94-97 (DIAG). Mg(2+) is bound by residues Ser38 and Thr58. Phe129 serves as a coordination point for GTP. Residues 230 to 231 (NL), Leu231, and 263 to 265 (SGV) contribute to the ATP site. 263-265 (SGV) lines the GTP pocket. One can recognise a TGS domain in the interval 303–386 (NLIYFFTAGP…QDGDIIFFKF (84 aa)).

It belongs to the TRAFAC class OBG-HflX-like GTPase superfamily. OBG GTPase family. YchF/OLA1 subfamily. Monomer (Potential). Interacts with CAR4/GAP1. Mg(2+) serves as cofactor.

The protein localises to the cytoplasm. It is found in the cytosol. Its activity is regulated as follows. Activated by GAP1. Hydrolyzes ATP, and can also hydrolyze GTP with lower efficiency. Has lower affinity for GTP (Potential). Exhibits GTPase activity. Confers sensitivity to salinity stress by suppressing the anti-oxidation enzymatic activities and increasing lipid peroxidation thus leading to the accumulation of reactive oxygen species (ROS). Acts as a negative regulator of disease resistance against bacterial pathogen. The chain is Obg-like ATPase 1 from Arabidopsis thaliana (Mouse-ear cress).